The chain runs to 539 residues: Phosphoenolpyruvate carboxykinase (ATP) (539 aa).

Substrate contacts are provided by arginine 64, tyrosine 206, and lysine 212. ATP contacts are provided by residues lysine 212, histidine 231, and 247–255 (GLSGTGKTT). Residues lysine 212 and histidine 231 each contribute to the Mn(2+) site. Residue aspartate 268 participates in Mn(2+) binding. Residues glutamate 296, arginine 332, 448-449 (RI), and threonine 454 contribute to the ATP site. Arginine 332 contacts substrate.

The protein belongs to the phosphoenolpyruvate carboxykinase (ATP) family. Monomer. Mn(2+) serves as cofactor.

The protein localises to the cytoplasm. The catalysed reaction is oxaloacetate + ATP = phosphoenolpyruvate + ADP + CO2. It functions in the pathway carbohydrate biosynthesis; gluconeogenesis. In terms of biological role, involved in the gluconeogenesis. Catalyzes the conversion of oxaloacetate (OAA) to phosphoenolpyruvate (PEP) through direct phosphoryl transfer between the nucleoside triphosphate and OAA. This is Phosphoenolpyruvate carboxykinase (ATP) from Yersinia enterocolitica serotype O:8 / biotype 1B (strain NCTC 13174 / 8081).